The chain runs to 192 residues: Na(+)-translocating ferredoxin:NAD(+) oxidoreductase complex subunit A (192 aa).

Transmembrane regions (helical) follow at residues I4 to I24, V38 to V58, L71 to I91, A101 to I121, I133 to I153, and F169 to M189.

The protein belongs to the NqrDE/RnfAE family. The complex is composed of six subunits: RnfA, RnfB, RnfC, RnfD, RnfE and RnfG.

The protein resides in the cell membrane. It catalyses the reaction 2 reduced [2Fe-2S]-[ferredoxin] + Na(+)(in) + NAD(+) + H(+) = 2 oxidized [2Fe-2S]-[ferredoxin] + Na(+)(out) + NADH. Its function is as follows. Part of a membrane-bound complex that couples electron transfer with translocation of ions across the membrane. Couples electron transfer from reduced ferredoxin to NAD(+) with electrogenic movement of Na(+) out of the cell. Involved in caffeate respiration. This Acetobacterium woodii (strain ATCC 29683 / DSM 1030 / JCM 2381 / KCTC 1655 / WB1) protein is Na(+)-translocating ferredoxin:NAD(+) oxidoreductase complex subunit A.